Consider the following 375-residue polypeptide: MQLQFRSWMLAALTLLVVFLIFADISEIEEEIGNSGGRGTIRSAVNSLHSKSNRAEVVINGSSSPAVVDRSNESIKHNIQPASSKWRHNQTLSLRIRKQILKFLDAEKDISVLKGTLKPGDIIHYIFDRDSTMNVSQNLYELLPRTSPLKNKHFGTCAIVGNSGVLLNSGCGQEIDAHSFVIRCNLAPVQEYARDVGLKTDLVTMNPSVIQRAFEDLVNATWREKLLQRLHSLNGSILWIPAFMARGGKERVEWVNELILKHHVNVRTAYPSLRLLHAVRGYWLTNKVHIKRPTTGLLMYTLATRFCKQIYLYGFWPFPLDQNQNPVKYHYYDSLKYGYTSQASPHTMPLEFKALKSLHEQGALKLTVGQCDGAT.

At 1–6 (MQLQFR) the chain is on the cytoplasmic side. The chain crosses the membrane as a helical; Signal-anchor for type II membrane protein span at residues 7–23 (SWMLAALTLLVVFLIFA). Topologically, residues 24–375 (DISEIEEEIG…LTVGQCDGAT (352 aa)) are lumenal. 4 N-linked (GlcNAc...) asparagine glycosylation sites follow: Asn-60, Asn-72, Asn-89, and Asn-134. Intrachain disulfides connect Cys-157–Cys-307 and Cys-171–Cys-371. CMP-N-acetyl-beta-neuraminate contacts are provided by Asn-162 and Asn-185. 2 N-linked (GlcNAc...) asparagine glycosylation sites follow: Asn-219 and Asn-234. 6 residues coordinate CMP-N-acetyl-beta-neuraminate: Thr-294, Thr-295, Gly-296, Trp-316, Tyr-329, and His-330. Residue His-346 is the Proton donor/acceptor of the active site.

This sequence belongs to the glycosyltransferase 29 family. Post-translationally, autopolysialylated. Autopolysialylation is not a prerequisite for the polysialylation acitity, but enhances the polysialylation acitity. As to expression, highly expressed in fetal brain, kidney and heart and to a much lesser extent in adult heart and thymus.

The protein resides in the golgi apparatus membrane. Its subcellular location is the secreted. It is found in the cell membrane. It catalyses the reaction [N-acetyl-alpha-D-neuraminosyl-(2-&gt;8)](n) + CMP-N-acetyl-beta-neuraminate = [N-acetyl-alpha-D-neuraminosyl-(2-&gt;8)](n+1) + CMP + H(+). It functions in the pathway protein modification; protein glycosylation. Catalyzes the transfer of a sialic acid from a CMP-linked sialic acid donor onto a terminal alpha-2,3-, alpha-2,6-, or alpha-2,8-linked sialic acid of an N-linked glycan acceptor through alpha-2,8-linkages. Therefore, participates in polysialic acid synthesis on various sialylated N-acetyllactosaminyl oligosaccharides (alpha-2,3-, alpha-2,6-, or alpha-2,8-linked sialic acid), including NCAM1, NCAM1 N-glycans, FETUB N-glycans, and to a lesser extent sialylparagloboside (SPG) and AHSG, which does not require the initial addition of an alpha 2,8-sialic acid. However, does not exhibit sialic acid-polymerase activity. Catalyzes polysialic acid synthesis in the hippocampal on NCAM1 and supports neurite outgrowth. ST8SIA2-mediated polysialylation influences on oligodendrocyte differentiation and may promote the integrity of myelin and axons. The polypeptide is Alpha-2,8-sialyltransferase 8B (Homo sapiens (Human)).